The sequence spans 285 residues: RNA polymerase sigma factor RpoH (285 aa).

Positions 53-122 (LILSHLRFVV…IHEYVLRNWR (70 aa)) are sigma-70 factor domain-2. An Interaction with polymerase core subunit RpoC motif is present at residues 77 to 80 (DLVQ). The tract at residues 229–280 (ALASLDERSQHIVRSRWLDDDKATLQDLAEMYGVSAERIRQLEKNAMKKLKM) is sigma-70 factor domain-4. The segment at residues 253–272 (LQDLAEMYGVSAERIRQLEK) is a DNA-binding region (H-T-H motif).

It belongs to the sigma-70 factor family. RpoH subfamily. Interacts with the RNA polymerase core enzyme.

It is found in the cytoplasm. In terms of biological role, sigma factors are initiation factors that promote the attachment of RNA polymerase to specific initiation sites and are then released. This sigma factor is involved in regulation of expression of heat shock genes. In Vibrio vulnificus (strain CMCP6), this protein is RNA polymerase sigma factor RpoH.